The primary structure comprises 298 residues: Glyoxalase domain-containing protein 4 (298 aa).

The VOC 1 domain maps to 5 to 130 (RALHFVFKVG…GGYKFYLQDR (126 aa)). Lysine 109 carries the N6-succinyllysine modification. Serine 131 is modified (phosphoserine). A VOC 2 domain is found at 137 to 258 (PVLKVTLAVS…DGHEICFVGD (122 aa)). Lysine 273 carries the N6-succinyllysine modification.

It belongs to the glyoxalase I family. In terms of assembly, interacts with NUDT9.

The protein localises to the mitochondrion. The sequence is that of Glyoxalase domain-containing protein 4 (Glod4) from Rattus norvegicus (Rat).